A 710-amino-acid polypeptide reads, in one-letter code: Assimilatory nitrate reductase catalytic subunit (710 aa).

One can recognise a 4Fe-4S Mo/W bis-MGD-type domain in the interval 19 to 77; the sequence is EKTYDTQCPFCSMQCKMQLVEQTIVTRKKYTAIGIDNPTTQGRLCIKGMNAHQHALNSS. [4Fe-4S] cluster contacts are provided by Cys26, Cys29, Cys33, and Cys63.

It belongs to the prokaryotic molybdopterin-containing oxidoreductase family. The cofactor is [4Fe-4S] cluster. Requires Mo-bis(molybdopterin guanine dinucleotide) as cofactor.

Its pathway is nitrogen metabolism; nitrate reduction (denitrification); dinitrogen from nitrate: step 1/4. Nitrate reductase is a key enzyme involved in the first step of nitrate assimilation in plants, fungi and bacteria. The sequence is that of Assimilatory nitrate reductase catalytic subunit (nasC) from Bacillus subtilis (strain 168).